Consider the following 306-residue polypeptide: Abnormal cell migration protein 21 (306 aa).

2 consecutive TSP type-1 domains span residues 55 to 102 (PGGW…AISS) and 109 to 155 (FGSW…DECP). W58 and W61 each carry a C-linked (Man) tryptophan glycan. Cystine bridges form between C121-C149, C123-C154, and C134-C139. Residues 240–260 (CLPLHFAIPIFCFCILTGFLL) traverse the membrane as a helical segment.

Glycosylated via C-mannosylation by dpy-19 at Trp-58 and Trp-61.

The protein resides in the membrane. Required for determination of left/right asymmetry in nervous system. Acts together with unc-40 to control an initial left-right asymmetric polarization of the Q neuroblasts. Mig-21 and unc-40 may control the asymmetry in Wnt signaling response by restricting posterior polarization to one of the 2 Q neuroblasts. Involved in left-side QL posterior migration. In right-side QR, unc-40 and mig-21 pathways mutually inhibit each other in posterior migration, allowing anterior QR migration. This Caenorhabditis elegans protein is Abnormal cell migration protein 21 (mig-21).